The sequence spans 279 residues: Digeranylgeranylglyceryl phosphate synthase (279 aa).

6 consecutive transmembrane segments (helical) span residues 27–47, 90–110, 127–147, 199–219, 222–242, and 259–279; these read LIAT…VALI, FVGG…IAII, VLGN…GGAF, TGIF…LPFG, WGLF…FGAF, and TSIL…AAVI.

It belongs to the UbiA prenyltransferase family. DGGGP synthase subfamily. It depends on Mg(2+) as a cofactor.

It is found in the cell membrane. It carries out the reaction sn-3-O-(geranylgeranyl)glycerol 1-phosphate + (2E,6E,10E)-geranylgeranyl diphosphate = 2,3-bis-O-(geranylgeranyl)-sn-glycerol 1-phosphate + diphosphate. Its pathway is membrane lipid metabolism; glycerophospholipid metabolism. Functionally, prenyltransferase that catalyzes the transfer of the geranylgeranyl moiety of geranylgeranyl diphosphate (GGPP) to the C2 hydroxyl of (S)-3-O-geranylgeranylglyceryl phosphate (GGGP). This reaction is the second ether-bond-formation step in the biosynthesis of archaeal membrane lipids. This is Digeranylgeranylglyceryl phosphate synthase from Methanoculleus marisnigri (strain ATCC 35101 / DSM 1498 / JR1).